A 997-amino-acid polypeptide reads, in one-letter code: Protein translocase subunit SecA (997 aa).

ATP contacts are provided by residues Q102, 120–124, and D521; that span reads GEGKT. The segment at 893-997 is disordered; that stretch reads PADASPNGVV…KYKKCHGAEA (105 aa). Positions 938-953 are enriched in basic and acidic residues; it reads AIEREFEKKKQQELSH. Zn(2+)-binding residues include C981, C983, C992, and H993. A compositionally biased stretch (basic residues) spans 987–997; it reads KKYKKCHGAEA.

The protein belongs to the SecA family. As to quaternary structure, monomer and homodimer. Part of the essential Sec protein translocation apparatus which comprises SecA, SecYEG and auxiliary proteins SecDF. Other proteins may also be involved. Zn(2+) serves as cofactor.

The protein localises to the cell inner membrane. The protein resides in the cytoplasm. It carries out the reaction ATP + H2O + cellular proteinSide 1 = ADP + phosphate + cellular proteinSide 2.. Part of the Sec protein translocase complex. Interacts with the SecYEG preprotein conducting channel. Has a central role in coupling the hydrolysis of ATP to the transfer of proteins into and across the cell membrane, serving as an ATP-driven molecular motor driving the stepwise translocation of polypeptide chains across the membrane. In Acidobacterium capsulatum (strain ATCC 51196 / DSM 11244 / BCRC 80197 / JCM 7670 / NBRC 15755 / NCIMB 13165 / 161), this protein is Protein translocase subunit SecA.